Here is a 416-residue protein sequence, read N- to C-terminus: Hemagglutinin-esterase (416 aa).

The first 14 residues, 1–14, serve as a signal peptide directing secretion; that stretch reads MLSLILFFPSFAFA. The tract at residues 4–121 is esterase domain first part; sequence LILFFPSFAF…GVDSYMELKT (118 aa). Topologically, residues 15 to 393 are virion surface; the sequence is VTPVTPYFGP…ESVDVISSSY (379 aa). The active-site Nucleophile is serine 37. An intrachain disulfide couples cysteine 41 to cysteine 57. N-linked (GlcNAc...) asparagine; by host glycans are attached at residues asparagine 59 and asparagine 76. Intrachain disulfides connect cysteine 88/cysteine 136, cysteine 108/cysteine 156, cysteine 192/cysteine 273, cysteine 200/cysteine 246, and cysteine 206/cysteine 213. The interval 122-263 is receptor binding; sequence SFNIKLNQMA…GTHNASIVGN (142 aa). N-linked (GlcNAc...) asparagine; by host glycans are attached at residues asparagine 257, asparagine 278, and asparagine 294. The tract at residues 264–379 is esterase domain second part; that stretch reads FLFYPTKSYC…SCPQYVKLFD (116 aa). An intrachain disulfide couples cysteine 304 to cysteine 309. An N-linked (GlcNAc...) asparagine; by host glycan is attached at asparagine 322. The active-site Charge relay system is the histidine 328. A glycan (N-linked (GlcNAc...) asparagine; by host) is linked at asparagine 343. An intrachain disulfide couples cysteine 346 to cysteine 371. The helical transmembrane segment at 394–414 threads the bilayer; sequence FVATWVLLVVVVILIFVIISF. The Intravirion segment spans residues 415–416; it reads FC.

Belongs to the influenza type C/coronaviruses hemagglutinin-esterase family. As to quaternary structure, homodimer. N-glycosylated.

It is found in the virion membrane. It localises to the host cell membrane. It carries out the reaction N-acetyl-9-O-acetylneuraminate + H2O = N-acetylneuraminate + acetate + H(+). The enzyme catalyses N-acetyl-4-O-acetylneuraminate + H2O = N-acetylneuraminate + acetate + H(+). Its function is as follows. Structural protein that makes short spikes at the surface of the virus. Contains receptor binding and receptor-destroying activities. Mediates de-O-acetylation of N-acetyl-9-O-acetylneuraminic acid, which is probably the receptor determinant recognized by the virus on the surface of erythrocytes and susceptible cells. This receptor-destroying activity is important for virus release as it probably helps preventing self-aggregation and ensures the efficient spread of the progeny virus from cell to cell. May serve as a secondary viral attachment protein for initiating infection, the spike protein being the major one. Seems to be a 'luxury' protein that is not absolutely necessary for virus infection in culture. However, its presence in the virus may alter its pathogenicity. May become a target for both the humoral and the cellular branches of the immune system. The chain is Hemagglutinin-esterase (HE) from Homo sapiens (Human).